Here is a 131-residue protein sequence, read N- to C-terminus: Phosphoribosyl-AMP cyclohydrolase (131 aa).

Mg(2+) is bound at residue Asp78. Residue Cys79 coordinates Zn(2+). 2 residues coordinate Mg(2+): Asp80 and Asp82. The Zn(2+) site is built by Cys96 and Cys103.

The protein belongs to the PRA-CH family. As to quaternary structure, homodimer. The cofactor is Mg(2+). It depends on Zn(2+) as a cofactor.

It localises to the cytoplasm. The enzyme catalyses 1-(5-phospho-beta-D-ribosyl)-5'-AMP + H2O = 1-(5-phospho-beta-D-ribosyl)-5-[(5-phospho-beta-D-ribosylamino)methylideneamino]imidazole-4-carboxamide. It participates in amino-acid biosynthesis; L-histidine biosynthesis; L-histidine from 5-phospho-alpha-D-ribose 1-diphosphate: step 3/9. Functionally, catalyzes the hydrolysis of the adenine ring of phosphoribosyl-AMP. The chain is Phosphoribosyl-AMP cyclohydrolase from Neisseria gonorrhoeae (strain ATCC 700825 / FA 1090).